A 322-amino-acid chain; its full sequence is Sulfate adenylyltransferase subunit 2 (322 aa).

This sequence belongs to the PAPS reductase family. CysD subfamily. Heterodimer composed of CysD, the smaller subunit, and CysN.

It catalyses the reaction sulfate + ATP + H(+) = adenosine 5'-phosphosulfate + diphosphate. It participates in sulfur metabolism; hydrogen sulfide biosynthesis; sulfite from sulfate: step 1/3. In terms of biological role, with CysN forms the ATP sulfurylase (ATPS) that catalyzes the adenylation of sulfate producing adenosine 5'-phosphosulfate (APS) and diphosphate, the first enzymatic step in sulfur assimilation pathway. APS synthesis involves the formation of a high-energy phosphoric-sulfuric acid anhydride bond driven by GTP hydrolysis by CysN coupled to ATP hydrolysis by CysD. The sequence is that of Sulfate adenylyltransferase subunit 2 from Bradyrhizobium sp. (strain BTAi1 / ATCC BAA-1182).